The chain runs to 153 residues: GVQKTVVEAPSTVSAEKMYGFLLDMDTVFPKVLPQLIGKSVEILEGDGSVGTVKLVHLGEATEYTTMKQRVDVIDKAGLAYTYTTIGGDILVEVLESVVNEFVVVPTDGGCIVKNTTIYNTKGDAVLPEDKVKEATEKSALAFKAVEAYLLAN.

Belongs to the BetVI family. In terms of assembly, may form dimers.

The chain is Allergen Pet c 1 from Petroselinum crispum (Parsley).